Here is a 78-residue protein sequence, read N- to C-terminus: Xibalbin-13 1 (78 aa).

Positions 1 to 27 (MKEANTRRYIHLCLVVVLVSTIITTEA) are cleaved as a signal peptide. The propeptide occupies 28–31 (EDDR). Disulfide bonds link cysteine 34/cysteine 49, cysteine 41/cysteine 54, cysteine 48/cysteine 65, and cysteine 56/cysteine 63. At serine 76 the chain carries Serine amide.

Belongs to the xibalbin-13 family. As to expression, expressed by the venom gland.

The protein localises to the secreted. Probable neurotoxin. Strongly inhibits voltage-gated potassium channels (Kv1.1/KCNA1, Kv1.2/KCNA2, Kv1.3/KCNA3, and Kv1.6/KCNA6) and mildly inhibits sodium channels (Nav1.2/SCN2A, Nav1.4/SCN4A, Nav1.5/SCN5A, Nav1.6/SCN8A, and BgNav). Induces activation of protein kinase A type II (PKA-II) and MAP kinase Erk1/2 in primary nociceptive and non-nociceptive sensory neurons. Does not show cytotoxic activity. Does not have an impact on Ca2+, cAMP, and NO signaling in the cell types analyzed. Does not interfere with the adhesion of leukocytes to endothelial cells. In Xibalbanus tulumensis (Blind cave remipede), this protein is Xibalbin-13 1.